The following is a 239-amino-acid chain: Ribosomal RNA small subunit methyltransferase G (239 aa).

S-adenosyl-L-methionine-binding positions include Gly77, Phe82, 128-129 (AE), and Arg147. Positions 219–239 (KNTPKKYPRKPGTPNKSPIEG) are disordered.

This sequence belongs to the methyltransferase superfamily. RNA methyltransferase RsmG family.

It is found in the cytoplasm. In terms of biological role, specifically methylates the N7 position of guanine in position 535 of 16S rRNA. In Bacillus subtilis (strain 168), this protein is Ribosomal RNA small subunit methyltransferase G.